A 127-amino-acid polypeptide reads, in one-letter code: Probable toxin y4kH (127 aa).

It belongs to the MbcT/ParT/Res family.

In terms of biological role, probable toxic component of a type II toxin-antitoxin (TA) system. It is not known which gene encodes its antitoxin. The chain is Probable toxin y4kH from Sinorhizobium fredii (strain NBRC 101917 / NGR234).